Consider the following 159-residue polypeptide: Phosphopantetheine adenylyltransferase (159 aa).

Ser-9 contributes to the substrate binding site. Residues 9 to 10 (SF) and His-17 contribute to the ATP site. Substrate-binding residues include Lys-41, Leu-73, and Lys-87. ATP is bound by residues 88–90 (GLR), Glu-98, and 122–128 (YSFLSSS).

This sequence belongs to the bacterial CoaD family. In terms of assembly, homohexamer. Mg(2+) serves as cofactor.

The protein resides in the cytoplasm. The enzyme catalyses (R)-4'-phosphopantetheine + ATP + H(+) = 3'-dephospho-CoA + diphosphate. Its pathway is cofactor biosynthesis; coenzyme A biosynthesis; CoA from (R)-pantothenate: step 4/5. Functionally, reversibly transfers an adenylyl group from ATP to 4'-phosphopantetheine, yielding dephospho-CoA (dPCoA) and pyrophosphate. In Streptomyces coelicolor (strain ATCC BAA-471 / A3(2) / M145), this protein is Phosphopantetheine adenylyltransferase.